The sequence spans 291 residues: MMKREDVLMEALPYIQQFHGKTIVIKLGGHAMVDPEVLENAIKDAVLLHYVGIRVVLVHGGGPEITEKMKALGKESVFVGGLRVTDQETLEIAQMVLVGKINKGIISLIAKCGAKGVGLSGSDGNIILAKKMDLQKVNVQGVEQEVDLGHVGEIEWIDPSLLTTLLDRDYIPVISPIAIDRYGGSLNINADTAAGDIAIALKAYKLINMTDVDGVMDAKRTHVFRKLSITEANALLASGAIGEGMIPKVSSVIKAVENGVKYSHIINGNVEHNLILELFTHEGVGTMISLQ.

Substrate-binding positions include 61-62 (GG), Arg-83, and Asn-187.

It belongs to the acetylglutamate kinase family. ArgB subfamily.

The protein localises to the cytoplasm. The enzyme catalyses N-acetyl-L-glutamate + ATP = N-acetyl-L-glutamyl 5-phosphate + ADP. It participates in amino-acid biosynthesis; L-arginine biosynthesis; N(2)-acetyl-L-ornithine from L-glutamate: step 2/4. Its function is as follows. Catalyzes the ATP-dependent phosphorylation of N-acetyl-L-glutamate. This is Acetylglutamate kinase from Methanoregula boonei (strain DSM 21154 / JCM 14090 / 6A8).